The following is a 40-amino-acid chain: Photosystem II reaction center protein J (40 aa).

The chain crosses the membrane as a helical span at residues 8–28 (IPLWMIGTLAGILVISLIGIF).

Belongs to the PsbJ family. PSII is composed of 1 copy each of membrane proteins PsbA, PsbB, PsbC, PsbD, PsbE, PsbF, PsbH, PsbI, PsbJ, PsbK, PsbL, PsbM, PsbT, PsbX, PsbY, PsbZ, Psb30/Ycf12, at least 3 peripheral proteins of the oxygen-evolving complex and a large number of cofactors. It forms dimeric complexes.

Its subcellular location is the plastid membrane. Its function is as follows. One of the components of the core complex of photosystem II (PSII). PSII is a light-driven water:plastoquinone oxidoreductase that uses light energy to abstract electrons from H(2)O, generating O(2) and a proton gradient subsequently used for ATP formation. It consists of a core antenna complex that captures photons, and an electron transfer chain that converts photonic excitation into a charge separation. The polypeptide is Photosystem II reaction center protein J (Cuscuta gronovii (Common dodder)).